A 333-amino-acid chain; its full sequence is MTVDTAPQSHYQETKVSEIPIVILKSSATDDVAAHEAIEALKVAGVCIVRNLLDRSTVDKVRQELQPYDKQADSFEGFPKNYCQVAGLLSKSPTYAHSIVGNKLFTAVRNYFLTSTYECWAEKGTWMSVKSPPQLDSTLALYVNPGSGDQGLHRDDATQQNWNSGASEYSLGRDSGCAMMVALTECAREDGTTRFIPGSHLWDYQYDHPSNDDPRIRYAEMRPGDAYLMLSSVIHAGSVNYSTDRRRVLAAVFAARSHLRQVENQYLTYDIETVRTFPTWLQRFMGYSLSKLFQGWVDKKDPLLVVDPNAQPEGEDDGGMKPNEGEHVVEAQI.

Fe cation is bound by residues H153, D155, and H235. The segment at 309–333 (NAQPEGEDDGGMKPNEGEHVVEAQI) is disordered. Positions 323 to 333 (NEGEHVVEAQI) are enriched in basic and acidic residues.

Belongs to the PhyH family. As to quaternary structure, homodimer. Fe cation is required as a cofactor.

The protein operates within alkaloid biosynthesis. Its function is as follows. Dioxygenase; part of the gene cluster that mediates the biosynthesis of communesins, a prominent class of indole alkaloids with great potential as pharmaceuticals. Communesins are biosynthesized by the coupling of tryptamine and aurantioclavine, two building blocks derived from L-tryptophan. The L-tryptophan decarboxylase cnsB converts L-tryptophan to tryptamine, whereas the tryptophan dimethylallyltransferase cnsF converts L-tryptophan to 4-dimethylallyl tryptophan which is further transformed to aurantioclavine by the aurantioclavine synthase cnsA, probably aided by the catalase cnsD. The cytochrome P450 monooxygenase cnsC catalyzes the heterodimeric coupling between the two different indole moieties, tryptamine and aurantioclavine, to construct vicinal quaternary stereocenters and yield the heptacyclic communesin scaffold. The O-methyltransferase cnsE then methylates the communesin scaffold to produce communesin K, the simplest characterized communesin that contains the heptacyclic core. The dioxygenase cnsJ converts communesin K into communesin I. Acylation to introduce the hexadienyl group at position N16 of communesin I by the acyltransferase cnsK leads to the production of communesin B. The hexadienyl group is produced by the highly reducing polyketide synthase cnsI, before being hydrolytically removed from cnsI by the serine hydrolase cnsH, converted into hexadienyl-CoA by the CoA ligase cnsG, and then transferred to communesin I by cnsK. Surprisingly, cnsK may also be a promiscuous acyltransferase that can tolerate a range of acyl groups, including acetyl-, propionyl-, and butyryl-CoA, which lead to communesins A, G and H respectively. The roles of the alpha-ketoglutarate-dependent dioxygenases cnsM and cnsP have still to be determined. In Penicillium expansum (Blue mold rot fungus), this protein is Dioxygenase cnsJ.